A 166-amino-acid polypeptide reads, in one-letter code: Short form salivary protein D7R5 (166 aa).

Residues 1–22 form the signal peptide; the sequence is MEWRYFVVIALICPLIIVETLA. Intrachain disulfides connect C26–C58, C39–C166, and C98–C117.

This sequence belongs to the PBP/GOBP family.

It is found in the secreted. Functionally, in contrast to the related D7 salivary proteins, does not bind biogenic amines such as serotonin, noradrenaline, histamine and adrenaline. It is hypothesized that either D7r5 evolved an as yet unknown function or is becoming a pseudogene. This chain is Short form salivary protein D7R5, found in Anopheles gambiae (African malaria mosquito).